Reading from the N-terminus, the 114-residue chain is T cell receptor beta variable 6-6 (114 aa).

A signal peptide spans 1-21; it reads MSISLLCCAAFPLLWAGPVNA. Residues 22–114 form the Ig-like domain; sequence GVTQTPKFRI…TSVYFCASSY (93 aa). A disulfide bridge connects residues cysteine 42 and cysteine 110. Asparagine 84 carries an N-linked (GlcNAc...) asparagine glycan.

In terms of assembly, alpha-beta TR is a heterodimer composed of an alpha and beta chain; disulfide-linked. The alpha-beta TR is associated with the transmembrane signaling CD3 coreceptor proteins to form the TR-CD3 (TcR or TCR). The assembly of alpha-beta TR heterodimers with CD3 occurs in the endoplasmic reticulum where a single alpha-beta TR heterodimer associates with one CD3D-CD3E heterodimer, one CD3G-CD3E heterodimer and one CD247 homodimer forming a stable octameric structure. CD3D-CD3E and CD3G-CD3E heterodimers preferentially associate with TR alpha and TR beta chains, respectively. The association of the CD247 homodimer is the last step of TcR assembly in the endoplasmic reticulum and is required for transport to the cell surface.

The protein resides in the cell membrane. Functionally, v region of the variable domain of T cell receptor (TR) beta chain that participates in the antigen recognition. Alpha-beta T cell receptors are antigen specific receptors which are essential to the immune response and are present on the cell surface of T lymphocytes. Recognize peptide-major histocompatibility (MH) (pMH) complexes that are displayed by antigen presenting cells (APC), a prerequisite for efficient T cell adaptive immunity against pathogens. Binding of alpha-beta TR to pMH complex initiates TR-CD3 clustering on the cell surface and intracellular activation of LCK that phosphorylates the ITAM motifs of CD3G, CD3D, CD3E and CD247 enabling the recruitment of ZAP70. In turn ZAP70 phosphorylates LAT, which recruits numerous signaling molecules to form the LAT signalosome. The LAT signalosome propagates signal branching to three major signaling pathways, the calcium, the mitogen-activated protein kinase (MAPK) kinase and the nuclear factor NF-kappa-B (NF-kB) pathways, leading to the mobilization of transcription factors that are critical for gene expression and essential for T cell growth and differentiation. The T cell repertoire is generated in the thymus, by V-(D)-J rearrangement. This repertoire is then shaped by intrathymic selection events to generate a peripheral T cell pool of self-MH restricted, non-autoaggressive T cells. Post-thymic interaction of alpha-beta TR with the pMH complexes shapes TR structural and functional avidity. In Homo sapiens (Human), this protein is T cell receptor beta variable 6-6.